Consider the following 31-residue polypeptide: Photosystem II reaction center protein T (31 aa).

Residues Ala-3–Phe-23 traverse the membrane as a helical segment.

The protein belongs to the PsbT family. As to quaternary structure, PSII is composed of 1 copy each of membrane proteins PsbA, PsbB, PsbC, PsbD, PsbE, PsbF, PsbH, PsbI, PsbJ, PsbK, PsbL, PsbM, PsbT, PsbX, PsbY, Psb30/Ycf12, peripheral proteins PsbO, CyanoQ (PsbQ), PsbU, PsbV and a large number of cofactors. It forms dimeric complexes.

It localises to the cellular thylakoid membrane. Found at the monomer-monomer interface of the photosystem II (PS II) dimer, plays a role in assembly and dimerization of PSII. PSII is a light-driven water plastoquinone oxidoreductase, using light energy to abstract electrons from H(2)O, generating a proton gradient subsequently used for ATP formation. In Prochlorococcus marinus (strain NATL2A), this protein is Photosystem II reaction center protein T.